Here is a 494-residue protein sequence, read N- to C-terminus: Sulfate adenylyltransferase subunit 1 (494 aa).

Residues 24–240 (TRPLRLITCG…LELATVRSAQ (217 aa)) enclose the tr-type G domain. The segment at 33–40 (GSVDDGKS) is G1. 33–40 (GSVDDGKS) provides a ligand contact to GTP. The segment at 91 to 95 (GITID) is G2. The segment at 112 to 115 (DTPG) is G3. GTP is bound by residues 112–116 (DTPGH) and 167–170 (NKID). Positions 167-170 (NKID) are G4. The tract at residues 204 to 206 (SAL) is G5.

This sequence belongs to the TRAFAC class translation factor GTPase superfamily. Classic translation factor GTPase family. CysN/NodQ subfamily. As to quaternary structure, heterodimer composed of CysD, the smaller subunit, and CysN.

The catalysed reaction is sulfate + ATP + H(+) = adenosine 5'-phosphosulfate + diphosphate. Its pathway is sulfur metabolism; hydrogen sulfide biosynthesis; sulfite from sulfate: step 1/3. Functionally, with CysD forms the ATP sulfurylase (ATPS) that catalyzes the adenylation of sulfate producing adenosine 5'-phosphosulfate (APS) and diphosphate, the first enzymatic step in sulfur assimilation pathway. APS synthesis involves the formation of a high-energy phosphoric-sulfuric acid anhydride bond driven by GTP hydrolysis by CysN coupled to ATP hydrolysis by CysD. In Rhizobium tropici, this protein is Sulfate adenylyltransferase subunit 1.